We begin with the raw amino-acid sequence, 426 residues long: Diaminobutyrate--2-oxoglutarate transaminase (426 aa).

N6-(pyridoxal phosphate)lysine is present on Lys-274.

Belongs to the class-III pyridoxal-phosphate-dependent aminotransferase family. Pyridoxal 5'-phosphate is required as a cofactor.

The catalysed reaction is L-2,4-diaminobutanoate + 2-oxoglutarate = L-aspartate 4-semialdehyde + L-glutamate. Its pathway is amine and polyamine biosynthesis; ectoine biosynthesis; L-ectoine from L-aspartate 4-semialdehyde: step 1/3. Its function is as follows. Catalyzes reversively the conversion of L-aspartate beta-semialdehyde (ASA) to L-2,4-diaminobutyrate (DABA) by transamination with L-glutamate. In Oceanobacillus iheyensis (strain DSM 14371 / CIP 107618 / JCM 11309 / KCTC 3954 / HTE831), this protein is Diaminobutyrate--2-oxoglutarate transaminase (ectB).